The chain runs to 382 residues: tRNA-specific 2-thiouridylase MnmA (382 aa).

ATP-binding positions include 18-25 (AMSGGVDS) and Leu44. Residue Cys112 is the Nucleophile of the active site. The cysteines at positions 112 and 209 are disulfide-linked. Gly136 contacts ATP. The tract at residues 159–161 (RDQ) is interaction with tRNA. Residue Cys209 is the Cysteine persulfide intermediate of the active site.

The protein belongs to the MnmA/TRMU family.

The protein localises to the cytoplasm. It catalyses the reaction S-sulfanyl-L-cysteinyl-[protein] + uridine(34) in tRNA + AH2 + ATP = 2-thiouridine(34) in tRNA + L-cysteinyl-[protein] + A + AMP + diphosphate + H(+). In terms of biological role, catalyzes the 2-thiolation of uridine at the wobble position (U34) of tRNA, leading to the formation of s(2)U34. In Methylobacterium nodulans (strain LMG 21967 / CNCM I-2342 / ORS 2060), this protein is tRNA-specific 2-thiouridylase MnmA.